The sequence spans 239 residues: tRNA (guanine-N(7)-)-methyltransferase (239 aa).

S-adenosyl-L-methionine is bound by residues Glu-69, Glu-94, Asp-121, and Asp-144. Asp-144 is a catalytic residue. Lys-148 contacts substrate. An interaction with RNA region spans residues 150 to 155; that stretch reads RHNKRR. Substrate contacts are provided by residues Asp-180 and 217-220; that span reads TKFE.

The protein belongs to the class I-like SAM-binding methyltransferase superfamily. TrmB family. In terms of assembly, monomer.

It catalyses the reaction guanosine(46) in tRNA + S-adenosyl-L-methionine = N(7)-methylguanosine(46) in tRNA + S-adenosyl-L-homocysteine. The protein operates within tRNA modification; N(7)-methylguanine-tRNA biosynthesis. Its function is as follows. Catalyzes the formation of N(7)-methylguanine at position 46 (m7G46) in tRNA. In Cronobacter sakazakii (strain ATCC BAA-894) (Enterobacter sakazakii), this protein is tRNA (guanine-N(7)-)-methyltransferase.